We begin with the raw amino-acid sequence, 292 residues long: Ribosomal protein L11 methyltransferase (292 aa).

4 residues coordinate S-adenosyl-L-methionine: Thr136, Gly159, Asp181, and Asn228.

It belongs to the methyltransferase superfamily. PrmA family.

It is found in the cytoplasm. The catalysed reaction is L-lysyl-[protein] + 3 S-adenosyl-L-methionine = N(6),N(6),N(6)-trimethyl-L-lysyl-[protein] + 3 S-adenosyl-L-homocysteine + 3 H(+). In terms of biological role, methylates ribosomal protein L11. In Rhizobium leguminosarum bv. trifolii (strain WSM2304), this protein is Ribosomal protein L11 methyltransferase.